The following is a 378-amino-acid chain: 23S rRNA (uracil(747)-C(5))-methyltransferase RlmC (378 aa).

The [4Fe-4S] cluster site is built by Cys-3, Cys-11, Cys-14, and Cys-87. Residues Gln-212, Phe-241, Glu-262, and Asn-309 each coordinate S-adenosyl-L-methionine. Catalysis depends on Cys-336, which acts as the Nucleophile.

The protein belongs to the class I-like SAM-binding methyltransferase superfamily. RNA M5U methyltransferase family. RlmC subfamily.

The enzyme catalyses uridine(747) in 23S rRNA + S-adenosyl-L-methionine = 5-methyluridine(747) in 23S rRNA + S-adenosyl-L-homocysteine + H(+). In terms of biological role, catalyzes the formation of 5-methyl-uridine at position 747 (m5U747) in 23S rRNA. This chain is 23S rRNA (uracil(747)-C(5))-methyltransferase RlmC, found in Shewanella halifaxensis (strain HAW-EB4).